A 377-amino-acid chain; its full sequence is MGEIQTLNAKQNAGQPVIRLSGISKSFDGKEIIGNLNLDVNHGEFLTILGPSGCGKTTVLRMIAGFETADNGQITIDNQDVTNVPAEQRHVNTVFQSYALFPHMTVFDNVAFGLRMQKVPAAEIEPRVMDALKMVRLESMAQRKPHQLSGGQQQRIAIARAVVNKPKVLLLDESLSALDYKLRKQMQIELKQLQRQLGITFIFVTHDQEEALSMSDRIIVMRSGVIEQDGSPREIYEDPKNLFVARFIGEINVFEATAKERLDENRIRAEIEGVDSVVYFDQPVTEGQKLQVLLRPEDLRIEEIKESEEKGIVGHVTERTYKGMTLDSVIETESGMRVMVSEFFNEDDPDVDHSLGQKVAITWVESWEVVLSDEQEI.

The region spanning 18–248 is the ABC transporter domain; it reads IRLSGISKSF…PKNLFVARFI (231 aa). 50-57 serves as a coordination point for ATP; it reads GPSGCGKT.

Belongs to the ABC transporter superfamily. Spermidine/putrescine importer (TC 3.A.1.11.1) family. In terms of assembly, the complex is composed of two ATP-binding proteins (PotA), two transmembrane proteins (PotB and PotC) and a solute-binding protein (PotD).

It is found in the cell inner membrane. The catalysed reaction is ATP + H2O + polyamine-[polyamine-binding protein]Side 1 = ADP + phosphate + polyamineSide 2 + [polyamine-binding protein]Side 1.. In terms of biological role, part of the ABC transporter complex PotABCD involved in spermidine/putrescine import. Responsible for energy coupling to the transport system. This chain is Spermidine/putrescine import ATP-binding protein PotA, found in Vibrio vulnificus (strain CMCP6).